The sequence spans 208 residues: Small ribosomal subunit protein uS4 (208 aa).

The interval 30 to 51 (KSSLEKRPYAPGQHGQRRSKIS) is disordered. Positions 98–161 (RRLDNVVYRM…KNNPQVQRSI (64 aa)) constitute an S4 RNA-binding domain.

Belongs to the universal ribosomal protein uS4 family. In terms of assembly, part of the 30S ribosomal subunit. Contacts protein S5. The interaction surface between S4 and S5 is involved in control of translational fidelity.

One of the primary rRNA binding proteins, it binds directly to 16S rRNA where it nucleates assembly of the body of the 30S subunit. Its function is as follows. With S5 and S12 plays an important role in translational accuracy. The sequence is that of Small ribosomal subunit protein uS4 from Wolinella succinogenes (strain ATCC 29543 / DSM 1740 / CCUG 13145 / JCM 31913 / LMG 7466 / NCTC 11488 / FDC 602W) (Vibrio succinogenes).